We begin with the raw amino-acid sequence, 357 residues long: tRNA N6-adenosine threonylcarbamoyltransferase (357 aa).

Fe cation is bound by residues H115 and H119. Residues 137-141, D170, G183, and N281 each bind substrate; that span reads LASGG. D309 is a Fe cation binding site.

It belongs to the KAE1 / TsaD family. The cofactor is Fe(2+).

Its subcellular location is the cytoplasm. The catalysed reaction is L-threonylcarbamoyladenylate + adenosine(37) in tRNA = N(6)-L-threonylcarbamoyladenosine(37) in tRNA + AMP + H(+). Functionally, required for the formation of a threonylcarbamoyl group on adenosine at position 37 (t(6)A37) in tRNAs that read codons beginning with adenine. Is involved in the transfer of the threonylcarbamoyl moiety of threonylcarbamoyl-AMP (TC-AMP) to the N6 group of A37, together with TsaE and TsaB. TsaD likely plays a direct catalytic role in this reaction. This chain is tRNA N6-adenosine threonylcarbamoyltransferase, found in Nitrobacter winogradskyi (strain ATCC 25391 / DSM 10237 / CIP 104748 / NCIMB 11846 / Nb-255).